Consider the following 310-residue polypeptide: MAITKGNKIVLVGTGAVGSSYAYALMNQGISDELILVDLNEEKAKGDVLDLNHSIVYAPSPMEIKFGSYEDCKDAALVVICAGAAQKPGETRLDLVHKNVGIFESIVGNIMKSGFNGIFLVATNPVDILAYATWKFSGLPKERVIGSGTVLDTARFRYLLGEEMNAAPTSVHGYIIGEHGDSQLPVWSSATIAGTPIAPRLTDEKKQEIAENVRDAAYKIIEAKGATYYGIATGLARITRAILKNENVVLPVGTLLEGENGHDDVYIGVPAIINREGVRQVVELSLNDEEKEKFARSVETLKDIQAAIWS.

Residues Val-17, Asp-38, Lys-43, Tyr-69, and 83–84 (GA) contribute to the NAD(+) site. Gln-86 and Arg-92 together coordinate substrate. NAD(+)-binding positions include Ser-105, 122–124 (ATN), and Ser-147. 124-127 (NPVD) contacts substrate. A substrate-binding site is contributed by 152-155 (DTAR). Beta-D-fructose 1,6-bisphosphate is bound by residues Arg-157 and His-172. Catalysis depends on His-179, which acts as the Proton acceptor. Tyr-218 bears the Phosphotyrosine mark. A substrate-binding site is contributed by Thr-227.

It belongs to the LDH/MDH superfamily. LDH family. As to quaternary structure, homotetramer.

The protein localises to the cytoplasm. The enzyme catalyses (S)-lactate + NAD(+) = pyruvate + NADH + H(+). Its pathway is fermentation; pyruvate fermentation to lactate; (S)-lactate from pyruvate: step 1/1. With respect to regulation, allosterically activated by fructose 1,6-bisphosphate (FBP). Catalyzes the conversion of lactate to pyruvate. This chain is L-lactate dehydrogenase, found in Halalkalibacterium halodurans (strain ATCC BAA-125 / DSM 18197 / FERM 7344 / JCM 9153 / C-125) (Bacillus halodurans).